Here is a 699-residue protein sequence, read N- to C-terminus: Condensin complex subunit 2 (699 aa).

Disordered stretches follow at residues M1–A35 and E176–K203.

Belongs to the CND2 (condensin subunit 2) family. Component of the condensin complex, which contains the XCAP-E/SMC2 and XCAP-C/SMC4 heterodimer, and three non SMC subunits that probably regulate the complex: XCAP-H/NCAPH, XCAP-D2/NCAPD2 and XCAP-G/NCAPG. In terms of processing, phosphorylated by CDK1. Its phosphorylation, as well as that of XCAP-D2 and XCAP-G subunits, activates the condensin complex and is required for chromosome condensation.

It is found in the nucleus. The protein resides in the cytoplasm. It localises to the chromosome. Its function is as follows. Regulatory subunit of the condensin complex, a complex required for conversion of interphase chromatin into mitotic-like condense chromosomes. The condensin complex probably introduces positive supercoils into relaxed DNA in the presence of type I topoisomerases and converts nicked DNA into positive knotted forms in the presence of type II topoisomerase. The polypeptide is Condensin complex subunit 2 (ncaph) (Xenopus laevis (African clawed frog)).